Here is a 129-residue protein sequence, read N- to C-terminus: Virion-associated protein (129 aa).

Coiled coils occupy residues 1–31 (MANL…ILEL) and 38–59 (IKES…LIND). Residues 122–129 (PAGWPNQY) form a capsid binding region.

It belongs to the caulimovirus ORF III family. Homotetramer, through coiled-coil domain. Homotrimer when interacts with icosehadral capsid. Interacts with capsid protein, and with Movement protein.

It localises to the virion. The protein localises to the host cell junction. It is found in the host plasmodesma. Plays a role in virus cell-to-cell and plant-to-plant transmission. Interacts with virion icosahedral capsid and movement protein, thereby facilitating virion cell-to-cell transmission through plasmodesmata opened by viral movement protein. Also interacts with aphid transmission factor, attaching the virion to aphid stylet when the animal feeds on an virus infected plant. Aphid saliva may later detach the virion, inducing release of infectious particles when the animal feeds on a new plant. This chain is Virion-associated protein, found in Cauliflower mosaic virus (strain D/H) (CaMV).